A 249-amino-acid polypeptide reads, in one-letter code: DNA polymerase sliding clamp (249 aa).

It belongs to the PCNA family. As to quaternary structure, homotrimer. The subunits circularize to form a toroid; DNA passes through its center. Replication factor C (RFC) is required to load the toroid on the DNA.

Functionally, sliding clamp subunit that acts as a moving platform for DNA processing. Responsible for tethering the catalytic subunit of DNA polymerase and other proteins to DNA during high-speed replication. This Thermococcus sibiricus (strain DSM 12597 / MM 739) protein is DNA polymerase sliding clamp.